Reading from the N-terminus, the 495-residue chain is Methyl viologen resistance protein SmvA (495 aa).

A run of 14 helical transmembrane segments spans residues 5 to 25 (WLTL…ATVL), 44 to 64 (LWII…MGAL), 73 to 93 (LLML…FSHT), 96 to 116 (WLIA…PATL), 135 to 155 (VWAA…GILL), 158 to 178 (FYWG…MGLT), 192 to 212 (PLNL…VYSA), 220 to 240 (LSLW…GLFI), 260 to 280 (IILS…GFEL), 299 to 319 (VFML…GVLV), 327 to 347 (VATG…MTDF), 357 to 377 (LMAL…SAIM), 391 to 411 (IETM…GLLL), and 469 to 489 (VALS…WFSL).

It belongs to the major facilitator superfamily. TCR/Tet family.

Its subcellular location is the cell inner membrane. In terms of biological role, major efflux pump for acriflavine and other quaternary ammonium compounds (QACs). Also required for resistance to methyl viologen. The polypeptide is Methyl viologen resistance protein SmvA (smvA) (Salmonella typhimurium (strain LT2 / SGSC1412 / ATCC 700720)).